Here is a 194-residue protein sequence, read N- to C-terminus: 3-isopropylmalate dehydratase small subunit (194 aa).

It belongs to the LeuD family. LeuD type 1 subfamily. As to quaternary structure, heterodimer of LeuC and LeuD.

The enzyme catalyses (2R,3S)-3-isopropylmalate = (2S)-2-isopropylmalate. It functions in the pathway amino-acid biosynthesis; L-leucine biosynthesis; L-leucine from 3-methyl-2-oxobutanoate: step 2/4. Its function is as follows. Catalyzes the isomerization between 2-isopropylmalate and 3-isopropylmalate, via the formation of 2-isopropylmaleate. The protein is 3-isopropylmalate dehydratase small subunit of Anoxybacillus flavithermus (strain DSM 21510 / WK1).